Consider the following 348-residue polypeptide: Putative transport protein HP_0567 (348 aa).

Helical transmembrane passes span 6 to 26 (FFWILFLIGFYWMIYLYQDFL), 27 to 47 (MDALIAGLLCVGFFQVKVFLD), 56 to 76 (SFLCVLILASVLIVPLYFIVY), 143 to 163 (LKLITDALFILGLLFFFFYYG), 194 to 214 (IVLLTSLITVILEGVAFGVMI), 224 to 244 (LGILYGLASLVPAVGGALIWI), 266 to 286 (SILLISVLIDSVIKPILIVFI), and 300 to 320 (MLIFFSMIAGISQFGFWGIIV).

The protein belongs to the autoinducer-2 exporter (AI-2E) (TC 2.A.86) family.

The protein resides in the cell membrane. In Helicobacter pylori (strain ATCC 700392 / 26695) (Campylobacter pylori), this protein is Putative transport protein HP_0567.